Here is a 635-residue protein sequence, read N- to C-terminus: Membrane protein insertase YidC (635 aa).

Residues 8–28 traverse the membrane as a helical segment; the sequence is LILAMVLSALVMLVWSIFFAP. A disordered region spans residues 33 to 61; sequence PAQDTPAASTQGTAQPEAGGPATPGAVPQ. The next 4 helical transmembrane spans lie at 396 to 416, 470 to 490, 528 to 548, and 564 to 584; these read MIGN…LLVF, LPVL…FVTI, SFLH…SMWM, and IFAW…SGLV. Residues 615–635 are disordered; it reads IRSSLPSRAKAGDKGGDKGGK. Residues 624-635 show a composition bias toward basic and acidic residues; it reads KAGDKGGDKGGK.

The protein belongs to the OXA1/ALB3/YidC family. Type 1 subfamily. As to quaternary structure, interacts with the Sec translocase complex via SecD. Specifically interacts with transmembrane segments of nascent integral membrane proteins during membrane integration.

The protein resides in the cell inner membrane. Its function is as follows. Required for the insertion and/or proper folding and/or complex formation of integral membrane proteins into the membrane. Involved in integration of membrane proteins that insert both dependently and independently of the Sec translocase complex, as well as at least some lipoproteins. Aids folding of multispanning membrane proteins. The protein is Membrane protein insertase YidC of Paracoccus denitrificans (strain Pd 1222).